Reading from the N-terminus, the 248-residue chain is Anamorsin homolog (248 aa).

Residues 4–130 are N-terminal SAM-like domain; the sequence is FKGLQKSLYI…ETGSSARLSF (127 aa). A linker region spans residues 131–161; the sequence is AKKTSSVNVWKISGDDEELIDEEELLDEEDK. Residues Cys-172, Cys-181, Cys-184, and Cys-186 each coordinate [2Fe-2S] cluster. The interval 172-186 is fe-S binding site A; sequence CSTTGKRKACKNCSC. [4Fe-4S] cluster is bound by residues Cys-209, Cys-212, Cys-220, and Cys-223. 2 short sequence motifs (cx2C motif) span residues 209–212 and 220–223; these read CGNC and CSTC. Positions 209–223 are fe-S binding site B; sequence CGNCYLGDAFRCSTC.

This sequence belongs to the anamorsin family. As to quaternary structure, monomer. [2Fe-2S] cluster serves as cofactor. [4Fe-4S] cluster is required as a cofactor.

It is found in the cytoplasm. Its subcellular location is the mitochondrion intermembrane space. Its function is as follows. Component of the cytosolic iron-sulfur (Fe-S) protein assembly (CIA) machinery. Required for the maturation of extramitochondrial Fe-S proteins. Part of an electron transfer chain functioning in an early step of cytosolic Fe-S biogenesis, facilitating the de novo assembly of a [4Fe-4S] cluster on the cytosolic Fe-S scaffold complex. Electrons are transferred from NADPH via a FAD- and FMN-containing diflavin oxidoreductase. Together with the diflavin oxidoreductase, also required for the assembly of the diferric tyrosyl radical cofactor of ribonucleotide reductase (RNR), probably by providing electrons for reduction during radical cofactor maturation in the catalytic small subunit. In Drosophila virilis (Fruit fly), this protein is Anamorsin homolog.